A 444-amino-acid polypeptide reads, in one-letter code: Methylenetetrahydrofolate--tRNA-(uracil-5-)-methyltransferase TrmFO (444 aa).

Residue 10 to 15 (GAGLAG) participates in FAD binding.

This sequence belongs to the MnmG family. TrmFO subfamily. The cofactor is FAD.

Its subcellular location is the cytoplasm. It catalyses the reaction uridine(54) in tRNA + (6R)-5,10-methylene-5,6,7,8-tetrahydrofolate + NADH + H(+) = 5-methyluridine(54) in tRNA + (6S)-5,6,7,8-tetrahydrofolate + NAD(+). The enzyme catalyses uridine(54) in tRNA + (6R)-5,10-methylene-5,6,7,8-tetrahydrofolate + NADPH + H(+) = 5-methyluridine(54) in tRNA + (6S)-5,6,7,8-tetrahydrofolate + NADP(+). Catalyzes the folate-dependent formation of 5-methyl-uridine at position 54 (M-5-U54) in all tRNAs. In Streptococcus pneumoniae (strain 70585), this protein is Methylenetetrahydrofolate--tRNA-(uracil-5-)-methyltransferase TrmFO.